A 365-amino-acid polypeptide reads, in one-letter code: 3-dehydroquinate synthase (365 aa).

Residues glycine 106–aspartate 110, threonine 130–threonine 131, lysine 142, lysine 151, and phenylalanine 169–threonine 172 each bind NAD(+). Positions 184, 247, and 264 each coordinate Zn(2+).

Belongs to the sugar phosphate cyclases superfamily. Dehydroquinate synthase family. NAD(+) serves as cofactor. Co(2+) is required as a cofactor. Requires Zn(2+) as cofactor.

It localises to the cytoplasm. It carries out the reaction 7-phospho-2-dehydro-3-deoxy-D-arabino-heptonate = 3-dehydroquinate + phosphate. It functions in the pathway metabolic intermediate biosynthesis; chorismate biosynthesis; chorismate from D-erythrose 4-phosphate and phosphoenolpyruvate: step 2/7. In terms of biological role, catalyzes the conversion of 3-deoxy-D-arabino-heptulosonate 7-phosphate (DAHP) to dehydroquinate (DHQ). The polypeptide is 3-dehydroquinate synthase (Listeria monocytogenes serovar 1/2a (strain ATCC BAA-679 / EGD-e)).